A 73-amino-acid chain; its full sequence is MKPEIHPEYHEITVVMTDGSSFKTRTTWGKPGDTMRLDIDPKSHPAWTGVQKLVDTGGQIAKFNKRFSNFGLK.

The protein belongs to the bacterial ribosomal protein bL31 family. Type A subfamily. Part of the 50S ribosomal subunit.

Binds the 23S rRNA. This chain is Large ribosomal subunit protein bL31, found in Rhodospirillum centenum (strain ATCC 51521 / SW).